Consider the following 79-residue polypeptide: Antimicrobial peptide UyCT1 (79 aa).

The first 23 residues, 1-23 (MKTQLAFLAITVILMQLFAQTEA), serve as a signal peptide directing secretion. Ile-37 carries the isoleucine amide modification. A propeptide spanning residues 41–79 (GLRNVDQIADLFDSGLSDADDLFDSGLSDADAKFMKMFM) is cleaved from the precursor.

The protein belongs to the non-disulfide-bridged peptide (NDBP) superfamily. Short antimicrobial peptide (group 4) family. Expressed by the venom gland.

The protein resides in the secreted. It localises to the target cell membrane. In terms of biological role, inhibits the growth of Gram-positive (S.aureus, MIC=15 uM) and Gram-negative bacteria (E.coli, MIC=10 uM and P.aeruginosa, MIC=10 uM). It also shows 26% of hemolysis when 15 uM are tested (81% at 50 uM). Its function is as follows. Inhibits the growth of Gram-negative bacteria (E.coli, MIC=25 uM and P.aeruginosa, MIC=40 uM). It also shows 7% of hemolysis when 50 uM are tested. Does not show activity against the Gram-positive bacteria S.aureus. This is Antimicrobial peptide UyCT1 from Urodacus yaschenkoi (Inland robust scorpion).